The chain runs to 153 residues: Transcriptional repressor NrdR (153 aa).

The segment at 3–34 (CPSCFHNGTRVLDSRPVDEGRSIRRRRECESC) is a zinc-finger region. Residues 49–139 (LIVVKKEGTR…VYRQFKDLNV (91 aa)) enclose the ATP-cone domain.

Belongs to the NrdR family. Zn(2+) is required as a cofactor.

Functionally, negatively regulates transcription of bacterial ribonucleotide reductase nrd genes and operons by binding to NrdR-boxes. The chain is Transcriptional repressor NrdR from Bacillus cytotoxicus (strain DSM 22905 / CIP 110041 / 391-98 / NVH 391-98).